The primary structure comprises 294 residues: Phosphatidylglycerol--prolipoprotein diacylglyceryl transferase (294 aa).

Helical transmembrane passes span 10-30, 55-75, 91-111, 119-139, 196-216, 224-244, and 258-278; these read VALA…LLAF, LVFY…VLFY, WEGG…MWFF, AFQV…FGRI, PSQL…LWWY, MAAS…IEFF, and WMTK…IMLI. Arg-138 is a binding site for a 1,2-diacyl-sn-glycero-3-phospho-(1'-sn-glycerol).

It belongs to the Lgt family.

It is found in the cell inner membrane. The enzyme catalyses L-cysteinyl-[prolipoprotein] + a 1,2-diacyl-sn-glycero-3-phospho-(1'-sn-glycerol) = an S-1,2-diacyl-sn-glyceryl-L-cysteinyl-[prolipoprotein] + sn-glycerol 1-phosphate + H(+). Its pathway is protein modification; lipoprotein biosynthesis (diacylglyceryl transfer). Catalyzes the transfer of the diacylglyceryl group from phosphatidylglycerol to the sulfhydryl group of the N-terminal cysteine of a prolipoprotein, the first step in the formation of mature lipoproteins. This chain is Phosphatidylglycerol--prolipoprotein diacylglyceryl transferase, found in Psychrobacter arcticus (strain DSM 17307 / VKM B-2377 / 273-4).